Here is a 263-residue protein sequence, read N- to C-terminus: Hydroxyethylthiazole kinase 1 (263 aa).

Residue Met42 coordinates substrate. Residues Lys118 and Thr164 each contribute to the ATP site. Residue Gly191 coordinates substrate.

It belongs to the Thz kinase family. Mg(2+) is required as a cofactor.

The catalysed reaction is 5-(2-hydroxyethyl)-4-methylthiazole + ATP = 4-methyl-5-(2-phosphooxyethyl)-thiazole + ADP + H(+). The protein operates within cofactor biosynthesis; thiamine diphosphate biosynthesis; 4-methyl-5-(2-phosphoethyl)-thiazole from 5-(2-hydroxyethyl)-4-methylthiazole: step 1/1. Functionally, catalyzes the phosphorylation of the hydroxyl group of 4-methyl-5-beta-hydroxyethylthiazole (THZ). In Clostridium botulinum (strain ATCC 19397 / Type A), this protein is Hydroxyethylthiazole kinase 1.